Consider the following 403-residue polypeptide: 4-hydroxy-3-methylbut-2-enyl diphosphate reductase (403 aa).

A [4Fe-4S] cluster-binding site is contributed by Cys-66. His-96 is a (2E)-4-hydroxy-3-methylbut-2-enyl diphosphate binding site. His-96 serves as a coordination point for dimethylallyl diphosphate. Position 96 (His-96) interacts with isopentenyl diphosphate. Cys-157 is a [4Fe-4S] cluster binding site. His-185 contributes to the (2E)-4-hydroxy-3-methylbut-2-enyl diphosphate binding site. His-185 is a binding site for dimethylallyl diphosphate. Residue His-185 participates in isopentenyl diphosphate binding. Catalysis depends on Glu-187, which acts as the Proton donor. Position 250 (Thr-250) interacts with (2E)-4-hydroxy-3-methylbut-2-enyl diphosphate. Cys-288 contacts [4Fe-4S] cluster. Residues Ser-317, Ser-318, Asn-319, and Ser-379 each coordinate (2E)-4-hydroxy-3-methylbut-2-enyl diphosphate. Dimethylallyl diphosphate-binding residues include Ser-317, Ser-318, Asn-319, and Ser-379. 4 residues coordinate isopentenyl diphosphate: Ser-317, Ser-318, Asn-319, and Ser-379.

It belongs to the IspH family. The cofactor is [4Fe-4S] cluster.

The enzyme catalyses isopentenyl diphosphate + 2 oxidized [2Fe-2S]-[ferredoxin] + H2O = (2E)-4-hydroxy-3-methylbut-2-enyl diphosphate + 2 reduced [2Fe-2S]-[ferredoxin] + 2 H(+). It carries out the reaction dimethylallyl diphosphate + 2 oxidized [2Fe-2S]-[ferredoxin] + H2O = (2E)-4-hydroxy-3-methylbut-2-enyl diphosphate + 2 reduced [2Fe-2S]-[ferredoxin] + 2 H(+). It functions in the pathway isoprenoid biosynthesis; dimethylallyl diphosphate biosynthesis; dimethylallyl diphosphate from (2E)-4-hydroxy-3-methylbutenyl diphosphate: step 1/1. Its pathway is isoprenoid biosynthesis; isopentenyl diphosphate biosynthesis via DXP pathway; isopentenyl diphosphate from 1-deoxy-D-xylulose 5-phosphate: step 6/6. Catalyzes the conversion of 1-hydroxy-2-methyl-2-(E)-butenyl 4-diphosphate (HMBPP) into a mixture of isopentenyl diphosphate (IPP) and dimethylallyl diphosphate (DMAPP). Acts in the terminal step of the DOXP/MEP pathway for isoprenoid precursor biosynthesis. The chain is 4-hydroxy-3-methylbut-2-enyl diphosphate reductase from Picosynechococcus sp. (strain ATCC 27264 / PCC 7002 / PR-6) (Agmenellum quadruplicatum).